Consider the following 441-residue polypeptide: GTPase Der (441 aa).

EngA-type G domains lie at 4 to 168 and 177 to 352; these read PVVA…PEDI and IRIA…EQNS. GTP-binding positions include 10–17, 57–61, 121–124, 183–190, 230–234, and 295–298; these read GRPNVGKS, DTGGI, NKVE, DTAGM, and NKWD. In terms of domain architecture, KH-like spans 353–437; the sequence is TRVATATLNT…PIRMIVRQKD (85 aa).

This sequence belongs to the TRAFAC class TrmE-Era-EngA-EngB-Septin-like GTPase superfamily. EngA (Der) GTPase family. Associates with the 50S ribosomal subunit.

GTPase that plays an essential role in the late steps of ribosome biogenesis. This chain is GTPase Der, found in Desulfitobacterium hafniense (strain DSM 10664 / DCB-2).